The sequence spans 599 residues: MNGAEAMIKALEAEKVEILFGYPGGALLPFYDALHHSDLIHLLTRHEQAAAHAADGYARASGKVGVCIGTSGPGATNLVTGVATAHSDSSPMVALTGQVPTKLIGNDAFQEIDALGLFMPIVKHNFQIQKTCQIPEIFRSAFEIAQTGRPGPVHIDLPKDVQELELDIDKHPIPSKVKLIGYNPTTIGHPRQIKKAIKLIASAKRPIILAGGGVLLSGANEELLKLVELLNIPVCTTLMGKGCISENHPLALGMVGMHGTKPANYCLSESDVLISIGCRFSDRITGDIKSFATNAKIIHIDIDPAEIGKNVNVDVPIVGDAKLILKEVIKQLDYIINKDSKENNDKENISQWIENVNSLKKSSIPVMDYDDIPIKPQKIVKELMAVIDDLNINKNTIITTDVGQNQMWMAHYFKTQTPRSFLSSGGLGTMGFGFPSAIGAKVAKPDSKVICITGDGGFMMNCQELGTIAEYNIPVVICIFDNRTLGMVYQWQNLFYGKRQCSVNFGGAPDFIKLAESYGIKARRIESPNEINEALKEAINCDEPYLLDFAIDPSSALSMVPPGAKLTNIIDAVQEHPNEKIVCFDEIKRRYMENKRNRK.

Residue E47 coordinates thiamine diphosphate. Residues R149, 258–279, and 301–320 each bind FAD; these read HGTK…IGCR and DIDP…IVGD. A thiamine pyrophosphate binding region spans residues 404-484; the sequence is QNQMWMAHYF…VVICIFDNRT (81 aa). Mg(2+) is bound by residues D455 and N482.

The protein belongs to the TPP enzyme family. Dimer of large and small chains. Mg(2+) serves as cofactor. Requires thiamine diphosphate as cofactor.

The enzyme catalyses 2 pyruvate + H(+) = (2S)-2-acetolactate + CO2. Its pathway is amino-acid biosynthesis; L-isoleucine biosynthesis; L-isoleucine from 2-oxobutanoate: step 1/4. It functions in the pathway amino-acid biosynthesis; L-valine biosynthesis; L-valine from pyruvate: step 1/4. The sequence is that of Probable acetolactate synthase large subunit (ilvB) from Methanococcus aeolicus.